A 177-amino-acid chain; its full sequence is Large ribosomal subunit protein uL6 (177 aa).

The protein belongs to the universal ribosomal protein uL6 family. In terms of assembly, part of the 50S ribosomal subunit.

This protein binds to the 23S rRNA, and is important in its secondary structure. It is located near the subunit interface in the base of the L7/L12 stalk, and near the tRNA binding site of the peptidyltransferase center. This is Large ribosomal subunit protein uL6 from Rhizobium johnstonii (strain DSM 114642 / LMG 32736 / 3841) (Rhizobium leguminosarum bv. viciae).